A 122-amino-acid polypeptide reads, in one-letter code: Large ribosomal subunit protein uL14c (122 aa).

Belongs to the universal ribosomal protein uL14 family. As to quaternary structure, part of the 50S ribosomal subunit.

Its subcellular location is the plastid. The protein localises to the chloroplast. Binds to 23S rRNA. The chain is Large ribosomal subunit protein uL14c from Marchantia polymorpha (Common liverwort).